Reading from the N-terminus, the 385-residue chain is Probable tRNA sulfurtransferase (385 aa).

In terms of domain architecture, THUMP spans 65 to 165; it reads AILQELFSFL…KEHFLVFTER (101 aa). ATP is bound by residues 183–184, 208–209, arginine 267, glycine 285, and glutamine 294; these read LL and TF.

It belongs to the ThiI family.

It localises to the cytoplasm. It catalyses the reaction [ThiI sulfur-carrier protein]-S-sulfanyl-L-cysteine + a uridine in tRNA + 2 reduced [2Fe-2S]-[ferredoxin] + ATP + H(+) = [ThiI sulfur-carrier protein]-L-cysteine + a 4-thiouridine in tRNA + 2 oxidized [2Fe-2S]-[ferredoxin] + AMP + diphosphate. The enzyme catalyses [ThiS sulfur-carrier protein]-C-terminal Gly-Gly-AMP + S-sulfanyl-L-cysteinyl-[cysteine desulfurase] + AH2 = [ThiS sulfur-carrier protein]-C-terminal-Gly-aminoethanethioate + L-cysteinyl-[cysteine desulfurase] + A + AMP + 2 H(+). Its pathway is cofactor biosynthesis; thiamine diphosphate biosynthesis. Functionally, catalyzes the ATP-dependent transfer of a sulfur to tRNA to produce 4-thiouridine in position 8 of tRNAs, which functions as a near-UV photosensor. Also catalyzes the transfer of sulfur to the sulfur carrier protein ThiS, forming ThiS-thiocarboxylate. This is a step in the synthesis of thiazole, in the thiamine biosynthesis pathway. The sulfur is donated as persulfide by IscS. In Mycoplasma genitalium (strain ATCC 33530 / DSM 19775 / NCTC 10195 / G37) (Mycoplasmoides genitalium), this protein is Probable tRNA sulfurtransferase.